The sequence spans 633 residues: 1-deoxy-D-xylulose-5-phosphate synthase (633 aa).

Residues 1 to 12 (MSEPTANLQPAS) are compositionally biased toward polar residues. Residues 1–21 (MSEPTANLQPASRTPLLDRVN) form a disordered region. Thiamine diphosphate contacts are provided by residues His-86 and 127–129 (GHA). Asp-158 serves as a coordination point for Mg(2+). Thiamine diphosphate is bound by residues 159–160 (GS), Asn-187, and Glu-377. Asn-187 provides a ligand contact to Mg(2+).

It belongs to the transketolase family. DXPS subfamily. In terms of assembly, homodimer. Requires Mg(2+) as cofactor. Thiamine diphosphate is required as a cofactor.

It catalyses the reaction D-glyceraldehyde 3-phosphate + pyruvate + H(+) = 1-deoxy-D-xylulose 5-phosphate + CO2. It participates in metabolic intermediate biosynthesis; 1-deoxy-D-xylulose 5-phosphate biosynthesis; 1-deoxy-D-xylulose 5-phosphate from D-glyceraldehyde 3-phosphate and pyruvate: step 1/1. Catalyzes the acyloin condensation reaction between C atoms 2 and 3 of pyruvate and glyceraldehyde 3-phosphate to yield 1-deoxy-D-xylulose-5-phosphate (DXP). In Deinococcus geothermalis (strain DSM 11300 / CIP 105573 / AG-3a), this protein is 1-deoxy-D-xylulose-5-phosphate synthase.